The chain runs to 332 residues: Phosphate acyltransferase (332 aa).

This sequence belongs to the PlsX family. As to quaternary structure, homodimer. Probably interacts with PlsY.

It localises to the cytoplasm. The enzyme catalyses a fatty acyl-[ACP] + phosphate = an acyl phosphate + holo-[ACP]. Its pathway is lipid metabolism; phospholipid metabolism. Its function is as follows. Catalyzes the reversible formation of acyl-phosphate (acyl-PO(4)) from acyl-[acyl-carrier-protein] (acyl-ACP). This enzyme utilizes acyl-ACP as fatty acyl donor, but not acyl-CoA. The chain is Phosphate acyltransferase from Oceanobacillus iheyensis (strain DSM 14371 / CIP 107618 / JCM 11309 / KCTC 3954 / HTE831).